The sequence spans 185 residues: Ribosome-recycling factor (185 aa).

The protein belongs to the RRF family.

The protein resides in the cytoplasm. Its function is as follows. Responsible for the release of ribosomes from messenger RNA at the termination of protein biosynthesis. May increase the efficiency of translation by recycling ribosomes from one round of translation to another. The chain is Ribosome-recycling factor from Salinispora tropica (strain ATCC BAA-916 / DSM 44818 / JCM 13857 / NBRC 105044 / CNB-440).